Consider the following 73-residue polypeptide: Antimicrobial peptide 6 (73 aa).

The first 22 residues, M1–A22, serve as a signal peptide directing secretion. Positions E45–Y73 are excised as a propeptide.

It belongs to the non-disulfide-bridged peptide (NDBP) superfamily. Short antimicrobial peptide (group 4) family. As to expression, expressed by the venom gland.

The protein localises to the secreted. In terms of biological role, antibacterial peptide. The protein is Antimicrobial peptide 6 of Tityus costatus (Brazilian scorpion).